Consider the following 564-residue polypeptide: Septation ring formation regulator EzrA (564 aa).

Topologically, residues 1–4 are extracellular; it reads MVLF. A helical transmembrane segment spans residues 5–23; that stretch reads IILAILVVILIAIGVLFYM. Residues 24–564 lie on the Cytoplasmic side of the membrane; it reads RSNKRNLIEK…KHIEEQVIKE (541 aa). Coiled-coil stretches lie at residues 84–126, 165–223, 271–303, and 350–435; these read VEEK…HQVT, EAAE…LIRE, MISRLELDEANNKLENINDKLDEMYDLIEYEVK, and VRQF…RRLL.

This sequence belongs to the EzrA family.

It is found in the cell membrane. In terms of biological role, negative regulator of FtsZ ring formation; modulates the frequency and position of FtsZ ring formation. Inhibits FtsZ ring formation at polar sites. Interacts either with FtsZ or with one of its binding partners to promote depolymerization. This Staphylococcus epidermidis (strain ATCC 35984 / DSM 28319 / BCRC 17069 / CCUG 31568 / BM 3577 / RP62A) protein is Septation ring formation regulator EzrA.